We begin with the raw amino-acid sequence, 564 residues long: Adenine deaminase (564 aa).

Belongs to the metallo-dependent hydrolases superfamily. Adenine deaminase family. Mn(2+) serves as cofactor.

The enzyme catalyses adenine + H2O + H(+) = hypoxanthine + NH4(+). In Methylobacterium sp. (strain 4-46), this protein is Adenine deaminase.